Here is an 883-residue protein sequence, read N- to C-terminus: DNA mismatch repair protein MutS (883 aa).

602-609 is an ATP binding site; the sequence is GPNMSGKS.

The protein belongs to the DNA mismatch repair MutS family.

Its function is as follows. This protein is involved in the repair of mismatches in DNA. It is possible that it carries out the mismatch recognition step. This protein has a weak ATPase activity. This is DNA mismatch repair protein MutS from Staphylococcus haemolyticus (strain JCSC1435).